A 153-amino-acid chain; its full sequence is MRKYIPLVLFIFSWPVLCADIHGRVVRVLDGDTIEVMDSRKAVRIRLVNIDAPEKKQDYGRWSTDMMKSLVAGKTVTVTYFQRDRYGRMLGQVYAPDGMNVNQFMVRAGAAWVYEQYNTDPVLPVLQNEARQQKRGLWSDADPVPPWIWRHRK.

The N-terminal stretch at 1 to 19 is a signal peptide; sequence MRKYIPLVLFIFSWPVLCA. Catalysis depends on residues Arg-46, Glu-54, and Arg-88.

It belongs to the thermonuclease family.

This is an uncharacterized protein from Escherichia coli O157:H7.